Consider the following 357-residue polypeptide: S-adenosylmethionine:tRNA ribosyltransferase-isomerase (357 aa).

Belongs to the QueA family. In terms of assembly, monomer.

The protein localises to the cytoplasm. The enzyme catalyses 7-aminomethyl-7-carbaguanosine(34) in tRNA + S-adenosyl-L-methionine = epoxyqueuosine(34) in tRNA + adenine + L-methionine + 2 H(+). Its pathway is tRNA modification; tRNA-queuosine biosynthesis. Transfers and isomerizes the ribose moiety from AdoMet to the 7-aminomethyl group of 7-deazaguanine (preQ1-tRNA) to give epoxyqueuosine (oQ-tRNA). The polypeptide is S-adenosylmethionine:tRNA ribosyltransferase-isomerase (Buchnera aphidicola subsp. Acyrthosiphon pisum (strain Tuc7)).